We begin with the raw amino-acid sequence, 70 residues long: Conotoxin Ep11.12 (70 aa).

The first 26 residues, 1–26, serve as a signal peptide directing secretion; the sequence is MMFRVTSVGCFLLVILSLNLVVLTNA. 4 disulfides stabilise this stretch: Cys27-Cys41, Cys34-Cys46, Cys40-Cys50, and Cys45-Cys54. Pro57 carries the proline amide modification. Positions 61 to 70 are excised as a propeptide; sequence AKLREFFRQR.

It belongs to the conotoxin I2 superfamily. In terms of tissue distribution, expressed by the venom duct.

It localises to the secreted. In Conus episcopatus (Bishop's cone), this protein is Conotoxin Ep11.12.